The primary structure comprises 496 residues: Nectin 1a (496 aa).

The signal sequence occupies residues 1–20 (MMFINLLLRLMCVFLIGADG). Residues 21–349 (QMVQMESSKA…FQDQQQAGVV (329 aa)) are Extracellular-facing. Positions 34–138 (GSQVELPCQF…GNRENMVNLT (105 aa)) constitute an Ig-like V-type domain. A disulfide bridge links Cys-41 with Cys-121. Asn-62 and Asn-136 each carry an N-linked (GlcNAc...) asparagine glycan. 2 consecutive Ig-like C2-type domains span residues 143–238 (PMIQ…VTLN) and 243–330 (PEVI…VIVT). Disulfide bonds link Cys-168/Cys-222 and Cys-265/Cys-312. The N-linked (GlcNAc...) asparagine glycan is linked to Asn-282. The chain crosses the membrane as a helical span at residues 350-370 (IGGAVVCGTVLLAAVTLLVVF). At 371–496 (LYRRRCMFKG…SVISKEEWYV (126 aa)) the chain is on the cytoplasmic side.

It belongs to the nectin family. Cis- and trans-homodimer. Can form trans-heterodimers. Expressed in the developing eye and nervous system.

The protein localises to the cell membrane. The protein resides in the cell junction. Its subcellular location is the adherens junction. Its function is as follows. Cell adhesion molecule that promotes cell-cell contacts and plays important roles in the development of the nervous system. Acts by forming homophilic or heterophilic trans-dimers. The sequence is that of Nectin 1a from Danio rerio (Zebrafish).